The chain runs to 426 residues: Protein prenyltransferase alpha subunit repeat-containing protein 1 (426 aa).

4 PFTA repeats span residues 86–119, 121–154, 180–213, and 219–252; these read ALVD…VLNP, KDLY…QKEC, EEMR…AKGN, and DELS…AKEL. Residues 255-279 are disordered; that stretch reads AAEKDVHTSQQPNGENTATASDDNH. Over residues 262 to 275 the composition is skewed to polar residues; that stretch reads TSQQPNGENTATAS. A PFTA 5 repeat occupies 290-323; that stretch reads EEIQLCTDLIESYPGHETLWCHRRHVFYLWHQWR.

This sequence belongs to the protein prenyltransferase subunit alpha family.

The chain is Protein prenyltransferase alpha subunit repeat-containing protein 1 (ptar1) from Danio rerio (Zebrafish).